We begin with the raw amino-acid sequence, 414 residues long: Protein PHLOEM PROTEIN 2-LIKE A10 (414 aa).

A run of 2 helical transmembrane segments spans residues 20-40 (WLIF…VYHL) and 379-399 (YVGA…LHII).

The protein resides in the membrane. In Arabidopsis thaliana (Mouse-ear cress), this protein is Protein PHLOEM PROTEIN 2-LIKE A10 (PP2A10).